The sequence spans 525 residues: Rho guanine nucleotide exchange factor gef3 (525 aa).

A DH domain is found at alanine 72 to leucine 268.

It localises to the cytoplasm. Functionally, has a role in the control of cell polarity and cytokinesis. Involved in bipolar growth and septum formation. The protein is Rho guanine nucleotide exchange factor gef3 (gef3) of Schizosaccharomyces pombe (strain 972 / ATCC 24843) (Fission yeast).